The sequence spans 115 residues: Ribonuclease P protein component 4 (115 aa).

Zn(2+) contacts are provided by cysteine 66, cysteine 69, cysteine 96, and cysteine 99.

Belongs to the eukaryotic/archaeal RNase P protein component 4 family. In terms of assembly, consists of a catalytic RNA component and at least 4-5 protein subunits. Zn(2+) serves as cofactor.

The protein resides in the cytoplasm. It catalyses the reaction Endonucleolytic cleavage of RNA, removing 5'-extranucleotides from tRNA precursor.. Part of ribonuclease P, a protein complex that generates mature tRNA molecules by cleaving their 5'-ends. The sequence is that of Ribonuclease P protein component 4 from Hyperthermus butylicus (strain DSM 5456 / JCM 9403 / PLM1-5).